A 199-amino-acid polypeptide reads, in one-letter code: MAPRSAEASRKTKETDISVSVHVDGSGKSDIATGVGFFDHMLDQLSRHSLIDMTVRAKGDLHIDDHHTVEDTGIALGQALTKALGERRGIMRYASIDLAMDETLTRAAIDVSGRPFLVWNVSFSSPKIGTFDTELVREFFQALAQNAGITLHVTNHYGANNHHIAETCFKAVARALRAALEPDPRQPDAVPSTKGSLKG.

Belongs to the imidazoleglycerol-phosphate dehydratase family.

Its subcellular location is the cytoplasm. It catalyses the reaction D-erythro-1-(imidazol-4-yl)glycerol 3-phosphate = 3-(imidazol-4-yl)-2-oxopropyl phosphate + H2O. Its pathway is amino-acid biosynthesis; L-histidine biosynthesis; L-histidine from 5-phospho-alpha-D-ribose 1-diphosphate: step 6/9. This Mesorhizobium japonicum (strain LMG 29417 / CECT 9101 / MAFF 303099) (Mesorhizobium loti (strain MAFF 303099)) protein is Imidazoleglycerol-phosphate dehydratase.